The primary structure comprises 530 residues: Putative ABC transporter ATP-binding protein SSO1893 (530 aa).

ABC transporter domains follow at residues 6 to 243 (IRDL…LGLE) and 282 to 516 (ILFA…EPPL). ATP is bound by residues 38 to 45 (GRSGSGKS) and 314 to 321 (GKNGSGKT).

Belongs to the ABC transporter superfamily.

The protein resides in the cell membrane. Its function is as follows. Probably part of an ABC transporter complex. Responsible for energy coupling to the transport system. The chain is Putative ABC transporter ATP-binding protein SSO1893 from Saccharolobus solfataricus (strain ATCC 35092 / DSM 1617 / JCM 11322 / P2) (Sulfolobus solfataricus).